Reading from the N-terminus, the 546-residue chain is Probable acyl-activating enzyme 21 (546 aa).

Belongs to the ATP-dependent AMP-binding enzyme family.

Functionally, may act as an acid--thiol ligase that activates carboxylic acids by forming acyl-CoAs. This Arabidopsis thaliana (Mouse-ear cress) protein is Probable acyl-activating enzyme 21 (AEE21).